Here is a 261-residue protein sequence, read N- to C-terminus: Ribonuclease 3 (261 aa).

Residues 20–144 enclose the RNase III domain; sequence YFALYRMLGF…FIGAIYLDKG (125 aa). Glu-62 contributes to the Mg(2+) binding site. Residue Asp-66 is part of the active site. Mg(2+)-binding residues include Asn-130 and Glu-133. Glu-133 is a catalytic residue. In terms of domain architecture, DRBM spans 172–241; that stretch reads NFKSKLFEWC…SQMTWRKIRT (70 aa).

This sequence belongs to the ribonuclease III family. As to quaternary structure, homodimer. Mg(2+) serves as cofactor.

Its subcellular location is the cytoplasm. It catalyses the reaction Endonucleolytic cleavage to 5'-phosphomonoester.. Its function is as follows. Digests double-stranded RNA. Involved in the processing of primary rRNA transcript to yield the immediate precursors to the large and small rRNAs (23S and 16S). Processes some mRNAs, and tRNAs when they are encoded in the rRNA operon. Processes pre-crRNA and tracrRNA of type II CRISPR loci if present in the organism. This chain is Ribonuclease 3, found in Azobacteroides pseudotrichonymphae genomovar. CFP2.